Reading from the N-terminus, the 318-residue chain is Porphobilinogen deaminase (318 aa).

Cysteine 241 carries the post-translational modification S-(dipyrrolylmethanemethyl)cysteine.

The protein belongs to the HMBS family. Monomer. Dipyrromethane serves as cofactor.

The catalysed reaction is 4 porphobilinogen + H2O = hydroxymethylbilane + 4 NH4(+). It functions in the pathway porphyrin-containing compound metabolism; protoporphyrin-IX biosynthesis; coproporphyrinogen-III from 5-aminolevulinate: step 2/4. Functionally, tetrapolymerization of the monopyrrole PBG into the hydroxymethylbilane pre-uroporphyrinogen in several discrete steps. The chain is Porphobilinogen deaminase from Geotalea uraniireducens (strain Rf4) (Geobacter uraniireducens).